The primary structure comprises 112 residues: Cytochrome c6 (112 aa).

The signal sequence occupies residues Met1–Ala25. Residues Cys39, Cys42, His43, and Met83 each contribute to the heme c site.

This sequence belongs to the cytochrome c family. PetJ subfamily. In terms of assembly, monomer. Post-translationally, binds 1 heme c group covalently per subunit.

The protein localises to the cellular thylakoid lumen. Its function is as follows. Functions as an electron carrier between membrane-bound cytochrome b6-f and photosystem I in oxygenic photosynthesis. In Synechococcus sp. (strain ATCC 27167 / PCC 6312), this protein is Cytochrome c6.